We begin with the raw amino-acid sequence, 406 residues long: Oligouridylate-binding protein 1 (406 aa).

RRM domains lie at 49–123 (RSVY…WAYA) and 134–212 (YNIF…WAAK). The tract at residues 231-250 (TSGTSDDGQEKVVNEDAPEN) is disordered. The RRM 3 domain occupies 255-329 (TTVYVGNLAP…KPVKCSWGSK (75 aa)).

It is found in the nucleus. Heterogeneous nuclear ribonucleoprotein (hnRNP)-like protein that acts as a component of the pre-mRNA processing machinery. Functions to facilitate the nuclear maturation of plant pre-mRNAs. Binds with high affinity to RNA molecules that contain AU-rich regions. May bind to the 3'-UTR and protects the mRNA against exonucleolytic degradation. Associates with nuclear poly(A)+ RNA in nucleus in vivo. Does not stimulate transcription or the 3' end cleavage/polyadenylation reaction. The protein is Oligouridylate-binding protein 1 (UBP1) of Nicotiana plumbaginifolia (Leadwort-leaved tobacco).